The primary structure comprises 165 residues: Nucleotide-binding protein Suden_0039 (165 aa).

The protein belongs to the YajQ family.

Nucleotide-binding protein. This is Nucleotide-binding protein Suden_0039 from Sulfurimonas denitrificans (strain ATCC 33889 / DSM 1251) (Thiomicrospira denitrificans (strain ATCC 33889 / DSM 1251)).